Here is an 852-residue protein sequence, read N- to C-terminus: MPANLSSALETFKQQRDAAEAHYLKANRVSVFFREYTAAVETLLAALWAEYFQNSALCLMAVGGFGRGELYPCSDVDLAVVSPAPLSDGIQEQIARFVQTLWDCKLMPSVKSGSVDELCESVRNDITGDTAFLEARFLFGNRQTADKLAEKMNAQRNVAAFVEAKLVEMEHRHAKSQGSGAVLEPNIKSCPGGLRDIHTLLWIAKAQGLATDLPDLLKQRILTRAEAGMLSHGYRRLAHIRIHLHLNAKRAEDRLLFDLQPQVAESMGYEGLNLRRQSEELMRVFYRAIKTVKQLSGILTPMLRSRVSSAPMRVTLRIDDDYIQVNNQIAARHTDIFFRRPEHIFKIVEIMQQRNDITALEPQTLRAWWGATRKINRSFYQNSENRHRFAGFFRNGNGLTQTLRFLNLYGVLGRYLPAWEKIVGLLQHDLFHIYPVDDHILTVVRNVRRLALDMHSHELPYASALMQSFEKQDILYLAAFFHDIAKGRGGDHAIQGIADARQFAADHFLTGEESDLLAWLVENHLLMSAVAQKEDIQDPDVLDAFCKRVQTHERLSALYLLTISDIRGTNPKLWNAWRASLLESLFHAAGRYLTGNGGNPHTLFGRRRQEAADLLTRAAVPEKQQKKLWNALGSAYFARHQSREILWHAANLVHDFETPIVRSRILFKSDSFQVMVFMPNGPRLFARLCRIFSRHGFDILAARAFITEHDYILDTFIVQIPSQHAPEDYPDIQSALEAELNSFIHGHTVAETQSHSRRISRRSRYMPIAPSITITPEEDYPDWYSVEITAVNRPFLLADMAEVFFAHNVSLRYAKISTLDERAEDSFTVFSLDLKNPKIQSSLKQTLLEQLS.

The tract at residues 1–318 is uridylyltransferase; the sequence is MPANLSSALE…SAPMRVTLRI (318 aa). Residues 319-672 are uridylyl-removing; the sequence is DDDYIQVNNQ…SRILFKSDSF (354 aa). An HD domain is found at 436–558; the sequence is VDDHILTVVR…VQTHERLSAL (123 aa). ACT domains are found at residues 673–757 and 785–852; these read QVMV…SHSR and SVEI…EQLS.

This sequence belongs to the GlnD family. Mg(2+) serves as cofactor.

It catalyses the reaction [protein-PII]-L-tyrosine + UTP = [protein-PII]-uridylyl-L-tyrosine + diphosphate. It carries out the reaction [protein-PII]-uridylyl-L-tyrosine + H2O = [protein-PII]-L-tyrosine + UMP + H(+). Uridylyltransferase (UTase) activity is inhibited by glutamine, while glutamine activates uridylyl-removing (UR) activity. Functionally, modifies, by uridylylation and deuridylylation, the PII regulatory proteins (GlnB and homologs), in response to the nitrogen status of the cell that GlnD senses through the glutamine level. Under low glutamine levels, catalyzes the conversion of the PII proteins and UTP to PII-UMP and PPi, while under higher glutamine levels, GlnD hydrolyzes PII-UMP to PII and UMP (deuridylylation). Thus, controls uridylylation state and activity of the PII proteins, and plays an important role in the regulation of nitrogen assimilation and metabolism. This Neisseria meningitidis serogroup A / serotype 4A (strain DSM 15465 / Z2491) protein is Bifunctional uridylyltransferase/uridylyl-removing enzyme.